The following is a 245-amino-acid chain: Exosome complex component RRP41 (245 aa).

N-acetylalanine is present on Ala-2.

The protein belongs to the RNase PH family. In terms of assembly, component of the RNA exosome core complex (Exo-9), composed of EXOSC1, EXOSC2, EXOSC3, EXOSC4, EXOSC5, EXOSC6, EXOSC7, EXOSC8 and EXOSC9; within the complex interacts with EXOSC2, EXOSC7 and EXOSC9. The catalytically inactive RNA exosome core complex (Exo-9) associates with the catalytic subunit EXOSC10/RRP6. Exo-9 may associate with DIS3 to form the nucleolar exosome complex, or DIS3L to form the cytoplasmic exosome complex. Exo-9 is formed by a hexameric base ring consisting of the heterodimers EXOSC4-EXOSC9, EXOSC5-EXOSC8 and EXOSC6-EXOSC7, and a cap ring consisting of EXOSC1, EXOSC2 and EXOSC3. The RNA exosome complex associates with cofactors C1D/RRP47, MPHOSPH6/MPP6 and MTREX/MTR4. Interacts with DDX60. Interacts with DIS3; the interaction is direct.

The protein localises to the cytoplasm. Its subcellular location is the nucleus. It localises to the nucleolus. The protein resides in the nucleoplasm. Functionally, non-catalytic component of the RNA exosome complex which has 3'-&gt;5' exoribonuclease activity and participates in a multitude of cellular RNA processing and degradation events. In the nucleus, the RNA exosome complex is involved in proper maturation of stable RNA species such as rRNA, snRNA and snoRNA, in the elimination of RNA processing by-products and non-coding 'pervasive' transcripts, such as antisense RNA species and promoter-upstream transcripts (PROMPTs), and of mRNAs with processing defects, thereby limiting or excluding their export to the cytoplasm. The RNA exosome may be involved in Ig class switch recombination (CSR) and/or Ig variable region somatic hypermutation (SHM) by targeting AICDA deamination activity to transcribed dsDNA substrates. In the cytoplasm, the RNA exosome complex is involved in general mRNA turnover and specifically degrades inherently unstable mRNAs containing AU-rich elements (AREs) within their 3' untranslated regions, and in RNA surveillance pathways, preventing translation of aberrant mRNAs. It seems to be involved in degradation of histone mRNA. The catalytic inactive RNA exosome core complex of 9 subunits (Exo-9) is proposed to play a pivotal role in the binding and presentation of RNA for ribonucleolysis, and to serve as a scaffold for the association with catalytic subunits and accessory proteins or complexes. EXOSC4 binds to ARE-containing RNAs. The sequence is that of Exosome complex component RRP41 (EXOSC4) from Homo sapiens (Human).